The sequence spans 472 residues: tRNA-2-methylthio-N(6)-dimethylallyladenosine synthase (472 aa).

The interval 1–24 (MTGTPDVFPPATPGGTPLVALPAG) is disordered. An MTTase N-terminal domain is found at 33–150 (GKLYIKTHGC…LPELIRARRE (118 aa)). The [4Fe-4S] cluster site is built by C42, C79, C113, C187, C191, and C194. Residues 173–407 (RADGASAFVS…RINAHAAGIS (235 aa)) form the Radical SAM core domain. The TRAM domain maps to 408–471 (EKMVGTVQTV…TNSLRARVVA (64 aa)).

Belongs to the methylthiotransferase family. MiaB subfamily. In terms of assembly, monomer. [4Fe-4S] cluster serves as cofactor.

The protein resides in the cytoplasm. The enzyme catalyses N(6)-dimethylallyladenosine(37) in tRNA + (sulfur carrier)-SH + AH2 + 2 S-adenosyl-L-methionine = 2-methylsulfanyl-N(6)-dimethylallyladenosine(37) in tRNA + (sulfur carrier)-H + 5'-deoxyadenosine + L-methionine + A + S-adenosyl-L-homocysteine + 2 H(+). Catalyzes the methylthiolation of N6-(dimethylallyl)adenosine (i(6)A), leading to the formation of 2-methylthio-N6-(dimethylallyl)adenosine (ms(2)i(6)A) at position 37 in tRNAs that read codons beginning with uridine. The protein is tRNA-2-methylthio-N(6)-dimethylallyladenosine synthase of Stenotrophomonas maltophilia (strain R551-3).